The following is a 466-amino-acid chain: Putative chitinase (466 aa).

The signal sequence occupies residues 1-17 (MYLTIWLVSILALGTWG). The region spanning 20-380 (FNRFCHYNSW…MAVIHGLNAY (361 aa)) is the GH18 domain. Cysteines 24 and 49 form a disulfide. The active-site Proton donor is glutamate 141. Residues 408–442 (NYRRRNQQEKVAEMEQRIRHLEQELQQSMGNMAYE) adopt a coiled-coil conformation.

Belongs to the glycosyl hydrolase 18 family. Prismatic layer of shell (at protein level). Expressed primarily in the mantle with highest level in the mantle edge and lower level in the mantle pallium.

It localises to the secreted. The catalysed reaction is Random endo-hydrolysis of N-acetyl-beta-D-glucosaminide (1-&gt;4)-beta-linkages in chitin and chitodextrins.. This is Putative chitinase from Pinctada maxima (Silver-lipped pearl oyster).